Consider the following 594-residue polypeptide: TOX high mobility group box family member 4-B (594 aa).

Disordered stretches follow at residues 160–225 (GTIL…PQKP) and 522–545 (ESPP…SPQC). Over residues 207–217 (KPKTPKKKKKK) the composition is skewed to basic residues. The Nuclear localization signal motif lies at 212–217 (KKKKKK). A DNA-binding region (HMG box) is located at residues 222–290 (PQKPLSAYAL…EYLKALALYK (69 aa)).

As to quaternary structure, component of the PNUTS-PP1 phosphatase complex.

It is found in the nucleus. The protein resides in the chromosome. Functionally, transcription factor that modulates cell fate reprogramming from the somatic state to the pluripotent and neuronal fate. Also acts as a regulatory component of protein phosphatase 1 (PP1) complexes. Component of the PNUTS-PP1 protein phosphatase complex, a PP1 complex that regulates RNA polymerase II transcription pause-release. PNUTS-PP1 also plays a role in the control of chromatin structure and cell cycle progression during the transition from mitosis into interphase. This chain is TOX high mobility group box family member 4-B (tox4-b), found in Xenopus laevis (African clawed frog).